A 690-amino-acid chain; its full sequence is Xylosyl- and glucuronyltransferase LARGE2 (690 aa).

The Cytoplasmic segment spans residues Met1–Arg8. The helical; Signal-anchor for type II membrane protein transmembrane segment at Ala9 to Gly29 threads the bilayer. The Lumenal portion of the chain corresponds to Arg30 to Ala690. N-linked (GlcNAc...) asparagine glycosylation is found at Asn51 and Asn78. The tract at residues Leu68–Arg343 is xylosyltransferase activity. Asp172 and Asp174 together coordinate Mn(2+). Asn202 carries an N-linked (GlcNAc...) asparagine glycan. The glucuronyltransferase activity stretch occupies residues Arg344–Ala686. The Mn(2+) site is built by Asp492 and Asp494.

In the C-terminal section; belongs to the glycosyltransferase 49 family. It in the N-terminal section; belongs to the glycosyltransferase 8 family. The protein belongs to the glycosyltransferase 8 family. Interacts with B4GAT1. Mn(2+) serves as cofactor. In terms of tissue distribution, highly expressed in the testis and kidney, but weakly expressed in the heart and brain. Expressed during embryogenesis from 7 dpc.

It is found in the golgi apparatus membrane. It carries out the reaction 3-O-[beta-D-GlcA-(1-&gt;3)-beta-D-Xyl-(1-&gt;4)-Rib-ol-P-Rib-ol-P-3-beta-D-GalNAc-(1-&gt;3)-beta-D-GlcNAc-(1-&gt;4)-(O-6-P-alpha-D-Man)]-Thr-[protein] + UDP-alpha-D-xylose = 3-O-[alpha-D-Xyl-(1-&gt;3)-beta-D-GlcA-(1-&gt;4)-beta-D-Xyl-(1-&gt;4)-Rib-ol-P-Rib-ol-P-3-beta-D-GalNAc-(1-&gt;3)-beta-D-GlcNAc-(1-&gt;4)-(O-6-P-alpha-D-Man)]-Thr-[protein] + UDP + H(+). The enzyme catalyses 3-O-{(1-&gt;[3)-alpha-D-Xyl-(1-&gt;3)-beta-D-GlcA-(1-&gt;](n)-4)-beta-D-Xyl-(1-&gt;4)-Rib-ol-P-Rib-ol-P-3-beta-D-GalNAc-(1-&gt;3)-beta-D-GlcNAc-(1-&gt;4)-O-6-P-alpha-D-Man}-L-Thr-[protein] + UDP-alpha-D-glucuronate = 3-O-{beta-D-GlcA-(1-&gt;[3)-alpha-D-Xyl-(1-&gt;3)-beta-D-GlcA-(1-&gt;](n)-4)-beta-D-Xyl-(1-&gt;4)-Rib-ol-P-Rib-ol-P-3-beta-D-GalNAc-(1-&gt;3)-beta-D-GlcNAc-(1-&gt;4)-O-6-P-alpha-D-Man}-L-Thr-[protein] + UDP + H(+). It catalyses the reaction 3-O-{beta-D-GlcA-(1-&gt;[3)-alpha-D-Xyl-(1-&gt;3)-beta-D-GlcA-(1-&gt;](n)-4)-beta-D-Xyl-(1-&gt;4)-Rib-ol-P-Rib-ol-P-3-beta-D-GalNAc-(1-&gt;3)-beta-D-GlcNAc-(1-&gt;4)-O-6-P-alpha-D-Man}-L-Thr-[protein] + UDP-alpha-D-xylose = 3-O-{(1-&gt;[3)-alpha-D-Xyl-(1-&gt;3)-beta-D-GlcA-(1-&gt;](n+1)-4)-beta-D-Xyl-(1-&gt;4)-Rib-ol-P-Rib-ol-P-3-beta-D-GalNAc-(1-&gt;3)-beta-D-GlcNAc-(1-&gt;4)-O-6-P-alpha-D-Man}-L-Thr-[protein] + UDP + H(+). It functions in the pathway protein modification; protein glycosylation. Its function is as follows. Bifunctional glycosyltransferase with both alpha-1,3-xylosyltransferase and beta-1,3-glucuronyltransferase activities involved in the maturation of alpha-dystroglycan (DAG1) by glycosylation leading to DAG1 binding to laminin G-like domain-containing extracellular proteins with high affinity and in a phosphorylated-O-mannosyl trisaccharide dependent manner. Elongates the glucuronyl-beta-1,4-xylose-beta disaccharide primer structure by adding repeating units [-3-Xylose-alpha-1,3-GlcA-beta-1-] to produce a heteropolysaccharide. Supports the maturation of DAG1 more effectively than LARGE1. In addition, can modify both heparan sulfate (HS)- and chondroitin/dermatan sulfate (CS/DS)-proteoglycans (PGs), namely GPC4, with a glycosaminoglycan (GAG)-like polysaccharide composed of xylose and glucuronic acid to confer laminin binding. The chain is Xylosyl- and glucuronyltransferase LARGE2 from Mus musculus (Mouse).